The sequence spans 485 residues: UDP-N-acetylmuramate--L-alanine ligase (485 aa).

Residue 127–133 (GTHGKTT) participates in ATP binding.

Belongs to the MurCDEF family.

The protein resides in the cytoplasm. The catalysed reaction is UDP-N-acetyl-alpha-D-muramate + L-alanine + ATP = UDP-N-acetyl-alpha-D-muramoyl-L-alanine + ADP + phosphate + H(+). Its pathway is cell wall biogenesis; peptidoglycan biosynthesis. In terms of biological role, cell wall formation. The polypeptide is UDP-N-acetylmuramate--L-alanine ligase (Shewanella frigidimarina (strain NCIMB 400)).